The following is a 454-amino-acid chain: Metacaspase-1A (454 aa).

The span at 1 to 16 (MSYGYPGQGYGPGGGH) shows a compositional bias: gly residues. The segment at 1 to 129 (MSYGYPGQGY…GHQTRNQGSH (129 aa)) is disordered. 4 stretches are compositionally biased toward low complexity: residues 38–47 (YSNPGQGQYN), 59–80 (YHQQPPQQYQQGSYNQGQYPPQ), 88–101 (GQQQQHHQQGHSQR), and 109–120 (GYDIYGYPIGSG). Catalysis depends on residues His-244 and Cys-300.

This sequence belongs to the peptidase C14B family.

Involved in cell death (apoptosis). The chain is Metacaspase-1A (casA) from Neurospora crassa (strain ATCC 24698 / 74-OR23-1A / CBS 708.71 / DSM 1257 / FGSC 987).